Here is a 268-residue protein sequence, read N- to C-terminus: Regulatory protein zeste (268 aa).

Residues 1 to 72 (TAEEKEVLYT…WLNSRLRKQY (72 aa)) mediate DNA binding. Low complexity predominate over residues 94–108 (VSVASAVPQQQQQQH). The interval 94 to 133 (VSVASAVPQQQQQQHHQQHDNVKEEPEYQISPDASEHNPQ) is disordered. Residues 110–119 (QQHDNVKEEP) show a composition bias toward basic and acidic residues.

In terms of assembly, self-associates forming complexes of several hundred monomers.

The protein resides in the nucleus. In terms of biological role, involved in transvection phenomena (= synapsis-dependent gene expression), where the synaptic pairing of chromosomes carrying genes with which zeste interacts influences the expression of these genes. Zeste binds to DNA and stimulates transcription from a nearby promoter. This is Regulatory protein zeste (z) from Drosophila sechellia (Fruit fly).